The chain runs to 289 residues: B- and T-lymphocyte attenuator (289 aa).

The signal sequence occupies residues 1–30 (MKTLPAMLGTGKLFWVFFLIPYLDIWNIHG). The Ig-like V-type domain maps to 31-132 (KESCDVQLYI…LIESHSTTLY (102 aa)). Over 31-157 (KESCDVQLYI…MASRPWLLYR (127 aa)) the chain is Extracellular. Disulfide bonds link C34-C63, C58-C115, and C72-C79. 3 N-linked (GlcNAc...) asparagine glycosylation sites follow: N75, N94, and N110. Residues 158–178 (LLPLGGLPLLITTCFCLFCCL) form a helical membrane-spanning segment. Residues 179–289 (RRHQGKQNEL…TEYASICVRS (111 aa)) are Cytoplasmic-facing.

In terms of assembly, interacts with tyrosine phosphatases PTPN6/SHP-1 and PTPN11/SHP-2. Interacts with TNFRSF14/HVEM (via cysteine-rich domain 1). In terms of processing, phosphorylated on Tyr residues by TNFRSF14 and by antigen receptors cross-linking, both inducing association with PTPN6 and PTPN11. Post-translationally, N-glycosylated.

The protein localises to the cell membrane. In terms of biological role, inhibitory receptor on lymphocytes that negatively regulates antigen receptor signaling via PTPN6/SHP-1 and PTPN11/SHP-2. May interact in cis (on the same cell) or in trans (on other cells) with TNFRSF14. In cis interactions, appears to play an immune regulatory role inhibiting in trans interactions in naive T cells to maintain a resting state. In trans interactions, can predominate during adaptive immune response to provide survival signals to effector T cells. This Homo sapiens (Human) protein is B- and T-lymphocyte attenuator.